The sequence spans 376 residues: PCM7-4 (376 aa).

Functionally, has antibacterial activity against Listeria monocytogenes. The chain is PCM7-4 from Bacillus velezensis.